A 379-amino-acid chain; its full sequence is Cytochrome b (379 aa).

A run of 4 helical transmembrane segments spans residues 34 to 54 (FGSL…FLAM), 78 to 99 (WLIR…YLHI), 114 to 134 (WNTG…GYVL), and 179 to 199 (FFTF…VHLL). 2 residues coordinate heme b: histidine 84 and histidine 98. Residues histidine 183 and histidine 197 each coordinate heme b. An a ubiquinone-binding site is contributed by histidine 202. 4 consecutive transmembrane segments (helical) span residues 227–247 (YKDL…TLFY), 289–309 (LGGV…PTLH), 321–341 (LTQT…WIGG), and 348–368 (FITI…ILMP).

It belongs to the cytochrome b family. As to quaternary structure, the cytochrome bc1 complex contains 3 respiratory subunits (MT-CYB, CYC1 and UQCRFS1), 2 core proteins (UQCRC1 and UQCRC2) and probably 6 low-molecular weight proteins. It depends on heme b as a cofactor.

It localises to the mitochondrion inner membrane. Component of the ubiquinol-cytochrome c reductase complex (complex III or cytochrome b-c1 complex) that is part of the mitochondrial respiratory chain. The b-c1 complex mediates electron transfer from ubiquinol to cytochrome c. Contributes to the generation of a proton gradient across the mitochondrial membrane that is then used for ATP synthesis. The sequence is that of Cytochrome b (MT-CYB) from Glyptemys muhlenbergii (Bog turtle).